A 137-amino-acid chain; its full sequence is uncharacterized protein (137 aa).

This is an uncharacterized protein from Mycoplasma genitalium (strain ATCC 33530 / DSM 19775 / NCTC 10195 / G37) (Mycoplasmoides genitalium).